A 260-amino-acid polypeptide reads, in one-letter code: Opacity protein opA58 (260 aa).

The N-terminal stretch at 1-23 is a signal peptide; that stretch reads MNPAPKKPSLLFSSLLFSSAAQA.

Belongs to the opacity porin family.

The protein localises to the cell outer membrane. In terms of biological role, implicated in a number of adherence functions. OPA proteins are implicated in pathogenesis and are subject to phase variation. The polypeptide is Opacity protein opA58 (opaJ) (Neisseria gonorrhoeae).